Consider the following 427-residue polypeptide: Serine hydroxymethyltransferase (427 aa).

122-124 serves as a coordination point for (6S)-5,6,7,8-tetrahydrofolate; sequence GHI. Lys228 is modified (N6-(pyridoxal phosphate)lysine).

Belongs to the SHMT family. As to quaternary structure, homodimer. It depends on pyridoxal 5'-phosphate as a cofactor.

It localises to the cytoplasm. It participates in amino-acid biosynthesis; glycine biosynthesis; glycine from L-serine: step 1/1. Catalyzes the reversible interconversion of serine and glycine with a modified folate serving as the one-carbon carrier. Also exhibits a pteridine-independent aldolase activity toward beta-hydroxyamino acids, producing glycine and aldehydes, via a retro-aldol mechanism. The chain is Serine hydroxymethyltransferase from Thermococcus onnurineus (strain NA1).